Here is a 360-residue protein sequence, read N- to C-terminus: Tyrosine-protein phosphatase non-receptor type 7 (360 aa).

The disordered stretch occupies residues 1 to 37; sequence MVQAHGGRSRAQPLTLSLGAAMTQPPPEKTPAKKHVR. The interaction with MAP kinases stretch occupies residues 38 to 51; sequence LQERRGSNVALMLD. The residue at position 44 (Ser44) is a Phosphoserine. A Phosphothreonine modification is found at Thr66. 3 positions are modified to phosphoserine: Ser93, Ser110, and Ser143. In terms of domain architecture, Tyrosine-protein phosphatase spans 97–350; it reads LEEEFLKIPS…QFLHHTLALY (254 aa). Residues Asp257, 291–297, and Gln335 contribute to the substrate site; that span reads CSAGIGR. Catalysis depends on Cys291, which acts as the Phosphocysteine intermediate. A Cysteine sulfenic acid (-SOH) modification is found at Cys291.

This sequence belongs to the protein-tyrosine phosphatase family. Non-receptor class subfamily. Monomer. Interacts with MAPK1, MAPK3 and several other MAP kinases. In terms of processing, phosphorylated on serine residues in resting T-cells. Phosphorylation increases upon exposure to stimuli that increase intracellular cAMP levels. Phosphorylation leads to dissociation of bound MAP kinases. Oxidized at active site cysteine. Treatment with pervanadate (vanadate and H(2)O(2)) or with antigen enhanced oxidation of active site cysteine. Expressed exclusively in thymus and spleen.

It is found in the cytoplasm. The protein localises to the cytoskeleton. The catalysed reaction is O-phospho-L-tyrosyl-[protein] + H2O = L-tyrosyl-[protein] + phosphate. Its activity is regulated as follows. Inhibited in cells after FCER1A triggering. In terms of biological role, protein phosphatase that acts preferentially on tyrosine-phosphorylated MAPK1. Plays a role in the regulation of T and B-lymphocyte development and signal transduction. The polypeptide is Tyrosine-protein phosphatase non-receptor type 7 (PTPN7) (Homo sapiens (Human)).